Here is a 681-residue protein sequence, read N- to C-terminus: Heat shock 70 kDa protein (681 aa).

The span at 655–665 shows a compositional bias: gly residues; sequence NFPGGMPGAGM. The interval 655–681 is disordered; it reads NFPGGMPGAGMPGNAPAGSGPTVEEVD. Low complexity predominate over residues 666-675; the sequence is PGNAPAGSGP.

It belongs to the heat shock protein 70 family.

This chain is Heat shock 70 kDa protein, found in Plasmodium falciparum.